The sequence spans 30 residues: Kalata-B14 (30 aa).

The cyclopeptide (Gly-Asp) cross-link spans 1-30 (GLPVCGESCFGGTCNTPGCACDPWPVCTRD). 3 disulfide bridges follow: cysteine 5/cysteine 19, cysteine 9/cysteine 21, and cysteine 14/cysteine 27.

This is a cyclic peptide.

Probably participates in a plant defense mechanism. The protein is Kalata-B14 of Oldenlandia affinis.